A 493-amino-acid polypeptide reads, in one-letter code: Adenylyltransferase and sulfurtransferase uba4 (493 aa).

ATP is bound by residues Gly-99, Asp-120, 127-131, Lys-144, and 188-189; these read SNLHR and DN. Zn(2+)-binding residues include Cys-237 and Cys-240. Cys-254 acts as the Glycyl thioester intermediate; for adenylyltransferase activity in catalysis. Residues Cys-316 and Cys-319 each contribute to the Zn(2+) site. Positions 376 to 491 constitute a Rhodanese domain; sequence INKEPTIIDV…WREQIDPDWP (116 aa). Cys-446 acts as the Cysteine persulfide intermediate; for sulfurtransferase activity in catalysis.

It in the N-terminal section; belongs to the HesA/MoeB/ThiF family. UBA4 subfamily. The cofactor is Zn(2+).

It is found in the cytoplasm. The protein resides in the cytosol. It carries out the reaction [molybdopterin-synthase sulfur-carrier protein]-C-terminal Gly-Gly + ATP + H(+) = [molybdopterin-synthase sulfur-carrier protein]-C-terminal Gly-Gly-AMP + diphosphate. It catalyses the reaction [molybdopterin-synthase sulfur-carrier protein]-C-terminal Gly-Gly-AMP + S-sulfanyl-L-cysteinyl-[cysteine desulfurase] + AH2 = [molybdopterin-synthase sulfur-carrier protein]-C-terminal-Gly-aminoethanethioate + L-cysteinyl-[cysteine desulfurase] + A + AMP + 2 H(+). Its pathway is tRNA modification; 5-methoxycarbonylmethyl-2-thiouridine-tRNA biosynthesis. It participates in cofactor biosynthesis; molybdopterin biosynthesis. Its function is as follows. Plays a central role in 2-thiolation of mcm(5)S(2)U at tRNA wobble positions of cytosolic tRNA(Lys), tRNA(Glu) and tRNA(Gln). Also essential during biosynthesis of the molybdenum cofactor. Acts by mediating the C-terminal thiocarboxylation of sulfur carriers urm1 and mocs2a. Its N-terminus first activates urm1 and mocs2a as acyl-adenylates (-COAMP), then the persulfide sulfur on the catalytic cysteine is transferred to urm1 and mocs2a to form thiocarboxylation (-COSH) of their C-terminus. The reaction probably involves hydrogen sulfide that is generated from the persulfide intermediate and that acts as a nucleophile towards urm1 and mocs2a. Subsequently, a transient disulfide bond is formed. Does not use thiosulfate as sulfur donor; nfs1 probably acting as a sulfur donor for thiocarboxylation reactions. This Aspergillus fumigatus (strain CBS 144.89 / FGSC A1163 / CEA10) (Neosartorya fumigata) protein is Adenylyltransferase and sulfurtransferase uba4.